The sequence spans 274 residues: Triosephosphate isomerase (274 aa).

31–33 (NWK) contributes to the substrate binding site. Residue histidine 118 is the Electrophile of the active site. Residue glutamate 188 is the Proton acceptor of the active site. Substrate is bound by residues glycine 194, serine 234, and 255-256 (GG).

It belongs to the triosephosphate isomerase family. Homodimer.

Its subcellular location is the cytoplasm. The enzyme catalyses D-glyceraldehyde 3-phosphate = dihydroxyacetone phosphate. It participates in carbohydrate biosynthesis; gluconeogenesis. The protein operates within carbohydrate degradation; glycolysis; D-glyceraldehyde 3-phosphate from glycerone phosphate: step 1/1. Involved in the gluconeogenesis. Catalyzes stereospecifically the conversion of dihydroxyacetone phosphate (DHAP) to D-glyceraldehyde-3-phosphate (G3P). In Chlamydia trachomatis serovar L2 (strain ATCC VR-902B / DSM 19102 / 434/Bu), this protein is Triosephosphate isomerase.